A 189-amino-acid polypeptide reads, in one-letter code: ATP synthase subunit b 1 (189 aa).

Residues 32-52 (TYFASQLFWLTIAFVILYIAL) traverse the membrane as a helical segment.

This sequence belongs to the ATPase B chain family. F-type ATPases have 2 components, F(1) - the catalytic core - and F(0) - the membrane proton channel. F(1) has five subunits: alpha(3), beta(3), gamma(1), delta(1), epsilon(1). F(0) has three main subunits: a(1), b(2) and c(10-14). The alpha and beta chains form an alternating ring which encloses part of the gamma chain. F(1) is attached to F(0) by a central stalk formed by the gamma and epsilon chains, while a peripheral stalk is formed by the delta and b chains.

It is found in the cell inner membrane. Functionally, f(1)F(0) ATP synthase produces ATP from ADP in the presence of a proton or sodium gradient. F-type ATPases consist of two structural domains, F(1) containing the extramembraneous catalytic core and F(0) containing the membrane proton channel, linked together by a central stalk and a peripheral stalk. During catalysis, ATP synthesis in the catalytic domain of F(1) is coupled via a rotary mechanism of the central stalk subunits to proton translocation. Its function is as follows. Component of the F(0) channel, it forms part of the peripheral stalk, linking F(1) to F(0). The polypeptide is ATP synthase subunit b 1 (Maricaulis maris (strain MCS10) (Caulobacter maris)).